Reading from the N-terminus, the 969-residue chain is UvrABC system protein A (969 aa).

ATP is bound at residue 32 to 39; the sequence is GLSGSGKS. The C4-type zinc-finger motif lies at 258–286; that stretch reads CPNGHPLAVDDLEPRSFSFNSPYGACPEC. 2 consecutive ABC transporter domains span residues 316-599 and 619-948; these read WSAG…KDSI and VDRK…KFLA. ATP is bound at residue 652–659; sequence GVSGSGKS. Residues 751 to 777 form a C4-type zinc finger; the sequence is CEACTGDGTIKIEMNFLPDVYVPCEVC.

The protein belongs to the ABC transporter superfamily. UvrA family. In terms of assembly, forms a heterotetramer with UvrB during the search for lesions.

It is found in the cytoplasm. Functionally, the UvrABC repair system catalyzes the recognition and processing of DNA lesions. UvrA is an ATPase and a DNA-binding protein. A damage recognition complex composed of 2 UvrA and 2 UvrB subunits scans DNA for abnormalities. When the presence of a lesion has been verified by UvrB, the UvrA molecules dissociate. The protein is UvrABC system protein A of Mycobacterium leprae (strain TN).